Consider the following 253-residue polypeptide: DnaJ homolog subfamily C member 8 (253 aa).

Ala2 is modified (N-acetylalanine). At Ser35 the chain carries Phosphoserine. The J domain maps to 57–124; that stretch reads NPFEVLQIDP…QKKRALDVIQ (68 aa). Lys146 carries the post-translational modification N6-acetyllysine. Residues 181-222 are compositionally biased toward basic and acidic residues; it reads EAKEMHERKRQREEEIEAQEKAKREREWQKNFEESRDGRVDS. Positions 181-253 are disordered; that stretch reads EAKEMHERKR…PPKVKMEQRE (73 aa). Short sequence motifs (nuclear localization signal) lie at residues 189-192 and 203-206; these read KRQR and KRER. Residue Ser222 is modified to Phosphoserine. Over residues 231 to 240 the composition is skewed to basic residues; that stretch reads KGKKEKKNRT. An essential for polyglutamine aggregation suppression region spans residues 232 to 253; sequence GKKEKKNRTFLRPPKVKMEQRE.

As to quaternary structure, interacts with SRPK1. Interacts with HSP70 (HSPA1A or HSPA1B). Ubiquitous.

The protein resides in the nucleus. Suppresses polyglutamine (polyQ) aggregation of ATXN3 in neuronal cells. This Homo sapiens (Human) protein is DnaJ homolog subfamily C member 8 (DNAJC8).